A 713-amino-acid chain; its full sequence is Phenylalanine--tRNA ligase beta subunit (713 aa).

In terms of domain architecture, tRNA-binding spans 39–153 (IRHVENIKYG…EANLNEDPIA (115 aa)). The region spanning 379-454 (LKPKEILFDH…RFYGYDNFPI (76 aa)) is the B5 domain. Mg(2+)-binding residues include aspartate 432, aspartate 438, glutamate 441, and glutamate 442.

The protein belongs to the phenylalanyl-tRNA synthetase beta subunit family. Type 1 subfamily. Tetramer of two alpha and two beta subunits. Mg(2+) is required as a cofactor.

The protein localises to the cytoplasm. The enzyme catalyses tRNA(Phe) + L-phenylalanine + ATP = L-phenylalanyl-tRNA(Phe) + AMP + diphosphate + H(+). The sequence is that of Phenylalanine--tRNA ligase beta subunit from Mycoplasma mobile (strain ATCC 43663 / 163K / NCTC 11711) (Mesomycoplasma mobile).